Here is a 72-residue protein sequence, read N- to C-terminus: Translation initiation factor IF-1 (72 aa).

One can recognise an S1-like domain in the interval 1–72; sequence MAKEDCIEME…TKGRIKFRSK (72 aa).

The protein belongs to the IF-1 family. In terms of assembly, component of the 30S ribosomal translation pre-initiation complex which assembles on the 30S ribosome in the order IF-2 and IF-3, IF-1 and N-formylmethionyl-tRNA(fMet); mRNA recruitment can occur at any time during PIC assembly.

It is found in the cytoplasm. In terms of biological role, one of the essential components for the initiation of protein synthesis. Stabilizes the binding of IF-2 and IF-3 on the 30S subunit to which N-formylmethionyl-tRNA(fMet) subsequently binds. Helps modulate mRNA selection, yielding the 30S pre-initiation complex (PIC). Upon addition of the 50S ribosomal subunit IF-1, IF-2 and IF-3 are released leaving the mature 70S translation initiation complex. The sequence is that of Translation initiation factor IF-1 from Francisella tularensis subsp. novicida (strain U112).